An 895-amino-acid polypeptide reads, in one-letter code: Isoleucine--tRNA ligase (895 aa).

A 'HIGH' region motif is present at residues 57–67 (PYANGSIHVGH). L-isoleucyl-5'-AMP is bound at residue Glu549. Positions 590 to 594 (KMSKS) match the 'KMSKS' region motif. Lys593 provides a ligand contact to ATP. The Zn(2+) site is built by Cys869, Cys872, Cys888, and Cys891.

Belongs to the class-I aminoacyl-tRNA synthetase family. IleS type 1 subfamily. Monomer. It depends on Zn(2+) as a cofactor.

It is found in the cytoplasm. The catalysed reaction is tRNA(Ile) + L-isoleucine + ATP = L-isoleucyl-tRNA(Ile) + AMP + diphosphate. Functionally, catalyzes the attachment of isoleucine to tRNA(Ile). As IleRS can inadvertently accommodate and process structurally similar amino acids such as valine, to avoid such errors it has two additional distinct tRNA(Ile)-dependent editing activities. One activity is designated as 'pretransfer' editing and involves the hydrolysis of activated Val-AMP. The other activity is designated 'posttransfer' editing and involves deacylation of mischarged Val-tRNA(Ile). The polypeptide is Isoleucine--tRNA ligase (Mycoplasma genitalium (strain ATCC 33530 / DSM 19775 / NCTC 10195 / G37) (Mycoplasmoides genitalium)).